Consider the following 601-residue polypeptide: uncharacterized protein (601 aa).

Positions Arg-24–Gly-35 are enriched in basic residues. 2 disordered regions span residues Arg-24 to Asp-106 and Tyr-171 to Glu-219. The segment covering Ser-54–Arg-81 has biased composition (polar residues). The span at Thr-92–Asp-106 shows a compositional bias: basic and acidic residues. Phosphoserine is present on residues Ser-236 and Ser-238. Residues Arg-260–Pro-283 are disordered.

The protein localises to the nucleus. This is an uncharacterized protein from Schizosaccharomyces pombe (strain 972 / ATCC 24843) (Fission yeast).